Here is a 293-residue protein sequence, read N- to C-terminus: MLKGSITALVTPFDREGAFDEKAFRAFVNWQIEEGTKGLVPVGTTGETPTLSHDEHKRVIEVCIEVAAGRVPVIAGAGSNNTVEAIELAQHAEKAGADAVLVVTPYYNKPNQRGLYEHFSRVVRSISIPLVIYNIPGRSIIDMTPETMGALVRDCKNIVGVKDATGKIERVSEQRAICGKEFIQLSGEDATALGFNAHGGVGCISVTSNIAPRLCAEFQEACQAGNFAKALELQDRLMPLHKALFLEPNPSGPKYALSRLGRIENVLRSPMVTIEAATAEKIDHAMKHAGLIN.

Position 45 (Thr-45) interacts with pyruvate. Tyr-133 acts as the Proton donor/acceptor in catalysis. The active-site Schiff-base intermediate with substrate is the Lys-162. Ile-204 is a binding site for pyruvate.

Belongs to the DapA family. In terms of assembly, homotetramer; dimer of dimers.

The protein resides in the cytoplasm. It catalyses the reaction L-aspartate 4-semialdehyde + pyruvate = (2S,4S)-4-hydroxy-2,3,4,5-tetrahydrodipicolinate + H2O + H(+). It functions in the pathway amino-acid biosynthesis; L-lysine biosynthesis via DAP pathway; (S)-tetrahydrodipicolinate from L-aspartate: step 3/4. In terms of biological role, catalyzes the condensation of (S)-aspartate-beta-semialdehyde [(S)-ASA] and pyruvate to 4-hydroxy-tetrahydrodipicolinate (HTPA). The polypeptide is 4-hydroxy-tetrahydrodipicolinate synthase (Brucella suis biovar 1 (strain 1330)).